Consider the following 1270-residue polypeptide: MTDDNSDDKIEDELQTFFTSDKDGNTHAYNPKSPPTQKSSASSVNWNSANPDDMVVDYETDPAVVTGENISLSLQGVEVFDHEKSSSDFTSKQVLDMHKDSICQSPALVGTEKPKYLQHSCHSLEAVEVQSVEPSLPFVWKPNDNLNCTGYSDALELNQTFDMTVDKVNCTFISHHAIRKSQSFHTAGSLPPTGRRSGNTSSLSYSTWTSSHSDKMHARETTYDRESFENPQVTPSEAQDTTYTAFSDVVMQSEVFVSDIGNQCPCSSGKVTSEYTDGSQQRLVGEKETQALTPVSDGMEVPNDSALQEFFCLSHDESNSEPHSQSSYRHKEMGQNLRETVSYCLVDDERPLMVPAFDKSEAQVLNPEHKVTETEDTQMVTKGKDSGTQNHTSELILSSPPGQKVGSSFGLTWDANDMVISTDNTMCMSTPVLEPTKVTFSVSPIEATEKCKKVEKGNRGLKNISNSKEAPVNLCKPSLGKSTTKTNTPIGCKVRKTEIISYPRPNFRNVKAKVMSRPVLQSKDAALSKVTPRPQLTSASSPSSAISRQPTVLSRTPRSDLNADKKAEILINKTHKQQFNKLITSQAVHVTTHSKNASHRVPRTTSAVKSNQEDVDKASSSNSACETGSVSALFQKIKGILPVKMESAECLEMTYVPNIDRISPEKKGEKENGTSMEKQELKQEIMNETFEYGSLFLGSASKTTTTSGRNISKPDSCGLRQIAAPKAKVGPPVSCLRRNSDNRNPSADRAVSPQRIRRVSSSGKPTSLKTAQSSWVNLPRPLPKSKASLKSPALRRTGSTPSIASTHSELSTYSNNSGNATVIKYEEKPPKPAFQNGSSGSFYLKPLVSRAHVHLLKTPPKGPSRKNLFTALNAVEKSRQKNPRSLCIQTQTAPDVLPPEKTLELTQYKTKCENQSGFILQLKQLLACGNTKSEALTVVIQHLLSEREEALKQHKTLSQELVNLRGELVTASTTCEKLEEARNELQTAYEAFVQQHQAEKTERENRLKEFYTREYEKLRDTYIEEAEKYKMQLQEQFDNLNAAHETSKLEIEASHSEKVELLKKAYEASLSEIKKGHEMEKKSLEDLLSEKQESLEKQISDLKSENDALNEKLKSEEQKRRAREKANLKNPQIMYLEQELESLKAVLEIKNEKLHQQDIKLMKMEKLVDNNTALVDKLKRFQQENEELKARMDKHMAISRQLSTEQAVLQESLEKESKVNKRLSMENEELLWKLHNGDLCSPKRSPTSSAIPFQSPRNSGSFPSPSISPR.

A compositionally biased stretch (acidic residues) spans 1 to 14; that stretch reads MTDDNSDDKIEDEL. Disordered regions lie at residues 1–50, 183–217, and 374–402; these read MTDD…NSAN, SFHT…DKMH, and TEDT…SPPG. Positions 39 to 50 are enriched in low complexity; the sequence is SSASSVNWNSAN. Threonine 186 is subject to Phosphothreonine. Low complexity predominate over residues 200–211; it reads TSSLSYSTWTSS. Phosphoserine occurs at positions 386, 399, and 443. A compositionally biased stretch (polar residues) spans 386–396; that stretch reads SGTQNHTSELI. 2 disordered regions span residues 524–558 and 592–622; these read DAAL…RTPR and THSK…SSSN. The segment covering 538-547 has biased composition (low complexity); sequence SASSPSSAIS. A Phosphoserine modification is found at serine 629. Composition is skewed to polar residues over residues 701–710, 759–776, and 797–816; these read SKTTTTSGRN, VSSS…SSWV, and TGST…YSNN. Residues 701 to 816 are disordered; that stretch reads SKTTTTSGRN…HSELSTYSNN (116 aa). Residues 940–1231 are a coiled coil; it reads IQHLLSEREE…RLSMENEELL (292 aa). Residues serine 1203, serine 1224, serine 1245, serine 1255, serine 1259, serine 1261, serine 1264, and serine 1268 each carry the phosphoserine modification. The tract at residues 1237–1270 is disordered; sequence GDLCSPKRSPTSSAIPFQSPRNSGSFPSPSISPR. Over residues 1244–1270 the composition is skewed to polar residues; sequence RSPTSSAIPFQSPRNSGSFPSPSISPR.

Belongs to the MTUS1 family. In terms of assembly, homodimer. Interacts with AGTR2. Interacts with PTPN6. Associates with microtubules.

The protein localises to the mitochondrion. Its subcellular location is the golgi apparatus. The protein resides in the cell membrane. It localises to the nucleus. Cooperates with AGTR2 to inhibit ERK2 activation and cell proliferation. May be required for AGTR2 cell surface expression. Together with PTPN6, induces UBE2V2 expression upon angiotensin-II stimulation. The chain is Microtubule-associated tumor suppressor 1 homolog (MTUS1) from Pongo abelii (Sumatran orangutan).